A 169-amino-acid chain; its full sequence is S-ribosylhomocysteine lyase (169 aa).

Fe cation-binding residues include His-54, His-58, and Cys-129.

It belongs to the LuxS family. In terms of assembly, homodimer. Requires Fe cation as cofactor.

The catalysed reaction is S-(5-deoxy-D-ribos-5-yl)-L-homocysteine = (S)-4,5-dihydroxypentane-2,3-dione + L-homocysteine. Its function is as follows. Involved in the synthesis of autoinducer 2 (AI-2) which is secreted by bacteria and is used to communicate both the cell density and the metabolic potential of the environment. The regulation of gene expression in response to changes in cell density is called quorum sensing. Catalyzes the transformation of S-ribosylhomocysteine (RHC) to homocysteine (HC) and 4,5-dihydroxy-2,3-pentadione (DPD). The chain is S-ribosylhomocysteine lyase from Actinobacillus pleuropneumoniae serotype 5b (strain L20).